Reading from the N-terminus, the 351-residue chain is Small ribosomal subunit biogenesis GTPase RsgA 1 (351 aa).

Positions 100 to 258 constitute a CP-type G domain; sequence LRTDAQIVAS…IIDTPGMREL (159 aa). Residues 148-151 and 200-208 each bind GTP; these read SKVD and GSSGAGKST. Zn(2+) is bound by residues C282, C287, H289, and C295.

It belongs to the TRAFAC class YlqF/YawG GTPase family. RsgA subfamily. In terms of assembly, monomer. Associates with 30S ribosomal subunit, binds 16S rRNA. Zn(2+) is required as a cofactor.

The protein localises to the cytoplasm. In terms of biological role, one of several proteins that assist in the late maturation steps of the functional core of the 30S ribosomal subunit. Helps release RbfA from mature subunits. May play a role in the assembly of ribosomal proteins into the subunit. Circularly permuted GTPase that catalyzes slow GTP hydrolysis, GTPase activity is stimulated by the 30S ribosomal subunit. The polypeptide is Small ribosomal subunit biogenesis GTPase RsgA 1 (Oceanobacillus iheyensis (strain DSM 14371 / CIP 107618 / JCM 11309 / KCTC 3954 / HTE831)).